The chain runs to 344 residues: Uroporphyrinogen decarboxylase (344 aa).

Residues 26 to 30 (RQAGR), F45, D75, Y151, S206, and H320 each bind substrate.

It belongs to the uroporphyrinogen decarboxylase family. Homodimer.

The protein resides in the cytoplasm. The catalysed reaction is uroporphyrinogen III + 4 H(+) = coproporphyrinogen III + 4 CO2. The protein operates within porphyrin-containing compound metabolism; protoporphyrin-IX biosynthesis; coproporphyrinogen-III from 5-aminolevulinate: step 4/4. Functionally, catalyzes the decarboxylation of four acetate groups of uroporphyrinogen-III to yield coproporphyrinogen-III. This is Uroporphyrinogen decarboxylase from Staphylococcus haemolyticus (strain JCSC1435).